The chain runs to 530 residues: NMDA receptor synaptonuclear signaling and neuronal migration factor (530 aa).

The N-myristoyl glycine moiety is linked to residue Gly2. Positions Gly2–Met233 are necessary and sufficient to elicit dendritic processes and synaptic contacts. Disordered regions lie at residues Ser34–Asn67 and Lys125–Lys197. Basic and acidic residues predominate over residues Pro38 to Leu48. Basic residues predominate over residues Lys125–Gln137. The segment covering Pro153–Gln162 has biased composition (polar residues). Ser204 is modified (phosphoserine). The short motif at Arg247–Arg250 is the Nuclear localization signal element. Residues Arg285–Gln312 are disordered. Ser290 and Ser292 each carry phosphoserine. A compositionally biased stretch (basic and acidic residues) spans Asp300 to Ser309.

It belongs to the NSMF family. As to quaternary structure, interacts with KPNA1; the interaction occurs in a calcium-independent manner after synaptic NMDA receptor stimulation and is required for nuclear import of NSMF but is competed by CABP1. Interacts (via the central NLS-containing motif region) with CABP1 (via EF-hands 1 and 2); the interaction occurs in a calcium-dependent manner after synaptic NMDA receptor stimulation and prevents the nuclear import of NSMF. Cannot be competed by calmodulin. Post-translationally, proteolytically processed after NMDA receptor activation. Cleaved in a calcium-dependent and calpain-sensitive manner. Calpain cleavage is essential for the translocation process from dendrites to the nucleus. Highly expressed in adult and fetal brain. Weakly expressed in heart, liver, spleen, testis, small intestine, skeletal muscle, peripheral white blood cells and kidney.

It is found in the nucleus. Its subcellular location is the nucleus envelope. The protein localises to the nucleus membrane. The protein resides in the nucleus matrix. It localises to the cytoplasm. It is found in the cell cortex. Its subcellular location is the cytoskeleton. The protein localises to the cell membrane. The protein resides in the cell projection. It localises to the dendrite. It is found in the synapse. Its subcellular location is the synaptosome. The protein localises to the postsynaptic density. The protein resides in the membrane. Functionally, couples NMDA-sensitive glutamate receptor signaling to the nucleus and triggers long-lasting changes in the cytoarchitecture of dendrites and spine synapse processes. Part of the cAMP response element-binding protein (CREB) shut-off signaling pathway. Stimulates outgrowth of olfactory axons and migration of gonadotropin-releasing hormone (GnRH) and luteinizing-hormone-releasing hormone (LHRH) neuronal cells. The sequence is that of NMDA receptor synaptonuclear signaling and neuronal migration factor (NSMF) from Homo sapiens (Human).